Here is a 356-residue protein sequence, read N- to C-terminus: GDP-mannose:di-myo-inositol-1,3'-phosphate beta-1,2-mannosyltransferase (356 aa).

Belongs to the MDIP synthase family. Mg(2+) is required as a cofactor.

It carries out the reaction bis(myo-inositol) 1,3'-phosphate + GDP-alpha-D-mannose = 2-O-(beta-D-mannosyl)-bis(myo-inositol) 1,3'-phosphate + GDP + H(+). The enzyme catalyses 2-O-(beta-D-mannosyl)-bis(myo-inositol) 1,3'-phosphate + GDP-alpha-D-mannose = 2-O-(beta-D-mannosyl-(1-&gt;2)-beta-D-mannosyl)-bis(myo-inositol) 1,3'-phosphate + GDP + H(+). It catalyses the reaction bis(myo-inositol) 1,3'-phosphate + 2 GDP-alpha-D-mannose = 2-O-(beta-D-mannosyl-(1-&gt;2)-beta-D-mannosyl)-bis(myo-inositol) 1,3'-phosphate + 2 GDP + 2 H(+). Its function is as follows. Catalyzes the transfer of the mannosyl group from GDP-mannose to di-myo-inositol-1,3'-phosphate (DIP), producing mannosyl-di-myo-inositol phosphate (MDIP). Can also use MDIP as an acceptor of a second mannose residue, yielding di-mannosyl-di-myo-inositol phosphate (MMDIP). Minor amounts of the tri-mannosylated form are also formed. The polypeptide is GDP-mannose:di-myo-inositol-1,3'-phosphate beta-1,2-mannosyltransferase (Thermotoga maritima (strain ATCC 43589 / DSM 3109 / JCM 10099 / NBRC 100826 / MSB8)).